The sequence spans 343 residues: Squamosa promoter-binding-like protein 11 (343 aa).

The segment at 1–48 is disordered; it reads MECNPVSSTTSSSLLWDWDATASAEPPPPPGKRGGRDSSSASASAKRG. Composition is skewed to low complexity over residues 7–19 and 37–48; these read SSTT…WDWD and DSSSASASAKRG. The segment at 64–141 adopts an SBP-type zinc-finger fold; the sequence is APRCQVEGCG…SDHNARRRKP (78 aa). Zn(2+) is bound by residues Cys-67, Cys-72, Cys-89, His-92, Cys-108, Cys-111, His-115, and Cys-127. Positions 124-140 match the Bipartite nuclear localization signal motif; the sequence is KRSCRRRLSDHNARRRK.

In terms of tissue distribution, expressed in stems, leaf sheaths, and young panicles.

The protein resides in the nucleus. Its function is as follows. Trans-acting factor that binds specifically to the consensus nucleotide sequence 5'-TNCGTACAA-3'. May be involved in panicle development. The protein is Squamosa promoter-binding-like protein 11 (SPL11) of Oryza sativa subsp. japonica (Rice).